A 746-amino-acid chain; its full sequence is Disintegrin and metalloproteinase domain-containing protein 18 (746 aa).

The first 16 residues, 1-16 (MFFLLALLTELGRLQA), serve as a signal peptide directing secretion. The propeptide occupies 17–183 (HVGSEGIFLH…QKKNLSKLLP (167 aa)). Asn36, Asn122, Asn149, Asn156, Asn177, and Asn294 each carry an N-linked (GlcNAc...) asparagine glycan. Topologically, residues 177-687 (NLSKLLPQYL…EKGYNAHWNN (511 aa)) are extracellular. In terms of domain architecture, Peptidase M12B spans 184–381 (QYLEIYIIVE…FEAKCLQKLS (198 aa)). 4 disulfides stabilise this stretch: Cys293–Cys376, Cys335–Cys360, Cys337–Cys342, and Cys450–Cys471. N-linked (GlcNAc...) asparagine glycosylation is found at Asn359, Asn465, Asn611, and Asn625. In terms of domain architecture, Disintegrin spans 390-479 (QPVCGNGILE…DCVPDTYALN (90 aa)). One can recognise an EGF-like domain in the interval 620–654 (TGYNCNTTTKCKGKGICNNFGNCQCFPGHKPPDCK). Disulfide bonds link Cys624/Cys636, Cys630/Cys642, and Cys644/Cys653. Residues 688–708 (WFILSFYIVLPFFIIFTIVIF) form a helical membrane-spanning segment. Residues 709-746 (KRNEIRKLCNRENTELIHPLYQKAMMWNINIAQNFRSK) are Cytoplasmic-facing.

Post-translationally, the prodomain and the metalloprotease-like domain are cleaved during the epididymal maturation of the spermatozoa. Expressed predominantly in adult and prepubertal testis.

It is found in the membrane. In terms of biological role, sperm surface membrane protein that may be involved in spermatogenesis and fertilization. This is a non catalytic metalloprotease-like protein. The chain is Disintegrin and metalloproteinase domain-containing protein 18 (ADAM18) from Macaca fascicularis (Crab-eating macaque).